Here is a 141-residue protein sequence, read N- to C-terminus: uncharacterized protein (141 aa).

4 consecutive transmembrane segments (helical) span residues 7–24 (YRIP…FLSP), 39–56 (FLKF…HRGI), 69–91 (FYLI…ILGF), and 116–138 (FFIL…SSFI).

The protein resides in the cell membrane. This is an uncharacterized protein from Aquifex aeolicus (strain VF5).